The following is a 420-amino-acid chain: FAD-dependent monooxygenase ntnJ (420 aa).

A helical transmembrane segment spans residues 12-31; the sequence is FRVIVVGAGIGGLSAAVALA. Positions 41 and 54 each coordinate FAD. A glycan (N-linked (GlcNAc...) asparagine) is linked at N124. Residue R187 is part of the active site. Residue N264 is glycosylated (N-linked (GlcNAc...) asparagine). Residues D302 and V315 each coordinate FAD.

Belongs to the paxM FAD-dependent monooxygenase family. Requires FAD as cofactor.

It localises to the membrane. It functions in the pathway secondary metabolite biosynthesis; terpenoid biosynthesis. FAD-dependent monooxygenase; part of the gene cluster that mediates the biosynthesis of the meroterpenoids nectripenoids A and B, as well as cochliquninone D and isocochliquninone E. The pathway probably begins with the HR-PKS ntnH that catalyzes two chain-extension steps to form a reduced triketide, which then primes the SAT domain in the NR-PKS ntnG to initiate three more cycles of extension to give a linear hexaketide corresponding to the polyketide part of nectripenoids. The FAD-dependent monooxygenase ntnJ then performs an oxidative decarboxylation at C11 of the ntnH/ntnG product, via an electrophilic aromatic hydroxylation with concomitant ipso-decarboxylation. The membrane-bound polyprenyl transferase ntnF then introduces a farnesyl group before the FAD-dependent monooxygenase ntnK functions as the first epoxidase on terminal C12'-C13' olefin, followed by a second epoxidation on C7'-C8' catalyzed by ntnA. The terpene cyclase/mutase ntnI then initiates the sequential tricyclic ring formation through protonation of the terminal epoxide and catalyzes the regioselective and stereoselective 6/6/6-tricyclic ring formation. The cytochrome P450 monooxygenase ntnM may then hydroxylate C1'. This chain is FAD-dependent monooxygenase ntnJ, found in Nectria sp.